Here is a 227-residue protein sequence, read N- to C-terminus: Phosphoribosylformylglycinamidine synthase subunit PurQ (227 aa).

One can recognise a Glutamine amidotransferase type-1 domain in the interval 3–225 (FAVIVFPGSN…LKQWRETYVV (223 aa)). The active-site Nucleophile is Cys86. Residues His194 and Glu196 contribute to the active site.

As to quaternary structure, part of the FGAM synthase complex composed of 1 PurL, 1 PurQ and 2 PurS subunits.

It is found in the cytoplasm. It carries out the reaction N(2)-formyl-N(1)-(5-phospho-beta-D-ribosyl)glycinamide + L-glutamine + ATP + H2O = 2-formamido-N(1)-(5-O-phospho-beta-D-ribosyl)acetamidine + L-glutamate + ADP + phosphate + H(+). The enzyme catalyses L-glutamine + H2O = L-glutamate + NH4(+). It functions in the pathway purine metabolism; IMP biosynthesis via de novo pathway; 5-amino-1-(5-phospho-D-ribosyl)imidazole from N(2)-formyl-N(1)-(5-phospho-D-ribosyl)glycinamide: step 1/2. In terms of biological role, part of the phosphoribosylformylglycinamidine synthase complex involved in the purines biosynthetic pathway. Catalyzes the ATP-dependent conversion of formylglycinamide ribonucleotide (FGAR) and glutamine to yield formylglycinamidine ribonucleotide (FGAM) and glutamate. The FGAM synthase complex is composed of three subunits. PurQ produces an ammonia molecule by converting glutamine to glutamate. PurL transfers the ammonia molecule to FGAR to form FGAM in an ATP-dependent manner. PurS interacts with PurQ and PurL and is thought to assist in the transfer of the ammonia molecule from PurQ to PurL. The polypeptide is Phosphoribosylformylglycinamidine synthase subunit PurQ (Bacillus thuringiensis (strain Al Hakam)).